We begin with the raw amino-acid sequence, 274 residues long: Transmembrane protein US18 (274 aa).

The next 7 helical transmembrane spans lie at 49-69 (GLVW…LAFP), 75-95 (CANG…LAML), 108-128 (FAHL…CTGF), 134-154 (VIGL…GLTY), 168-188 (IGYG…PVLW), 196-216 (LYVL…LDLI), and 228-248 (CVSV…VAIF).

The protein belongs to the cytomegalovirus US12 family.

It is found in the host membrane. The sequence is that of Transmembrane protein US18 (US18) from Human cytomegalovirus (strain Merlin) (HHV-5).